A 188-amino-acid chain; its full sequence is Elongation factor P (188 aa).

It belongs to the elongation factor P family.

The protein localises to the cytoplasm. It participates in protein biosynthesis; polypeptide chain elongation. In terms of biological role, involved in peptide bond synthesis. Stimulates efficient translation and peptide-bond synthesis on native or reconstituted 70S ribosomes in vitro. Probably functions indirectly by altering the affinity of the ribosome for aminoacyl-tRNA, thus increasing their reactivity as acceptors for peptidyl transferase. In Anaplasma phagocytophilum (strain HZ), this protein is Elongation factor P.